A 204-amino-acid chain; its full sequence is Holliday junction branch migration complex subunit RuvA (204 aa).

Residues 1–64 are domain I; sequence MIGRLCGTAE…EDAITLFGFI (64 aa). The segment at 65–143 is domain II; sequence DAAERDWFRL…AMPTGSAFIP (79 aa). The interval 144-154 is flexible linker; the sequence is TGTAPPVAPPQ. Residues 154–204 form a domain III region; the sequence is QGKLADALSALVNLGYRRAEAEAALSAVQAEAGEDAALDELIRGGLRRLAR.

This sequence belongs to the RuvA family. In terms of assembly, homotetramer. Forms an RuvA(8)-RuvB(12)-Holliday junction (HJ) complex. HJ DNA is sandwiched between 2 RuvA tetramers; dsDNA enters through RuvA and exits via RuvB. An RuvB hexamer assembles on each DNA strand where it exits the tetramer. Each RuvB hexamer is contacted by two RuvA subunits (via domain III) on 2 adjacent RuvB subunits; this complex drives branch migration. In the full resolvosome a probable DNA-RuvA(4)-RuvB(12)-RuvC(2) complex forms which resolves the HJ.

The protein localises to the cytoplasm. Its function is as follows. The RuvA-RuvB-RuvC complex processes Holliday junction (HJ) DNA during genetic recombination and DNA repair, while the RuvA-RuvB complex plays an important role in the rescue of blocked DNA replication forks via replication fork reversal (RFR). RuvA specifically binds to HJ cruciform DNA, conferring on it an open structure. The RuvB hexamer acts as an ATP-dependent pump, pulling dsDNA into and through the RuvAB complex. HJ branch migration allows RuvC to scan DNA until it finds its consensus sequence, where it cleaves and resolves the cruciform DNA. This is Holliday junction branch migration complex subunit RuvA from Acidiphilium cryptum (strain JF-5).